The chain runs to 495 residues: MTGGALLVAGTTSDAGKSMVVAGLCRLLARKGVRVAPFKAQNMSNNSAVTVDGGEIGRAQAMQARAAGLDPSVRFNPVLLKPGSDRTSQLVVRGRVTGTVSATDYITHRDRLADVVADELASLRAEFDVVLCEGAGSPAEINLRRTDLANMGLARRAHLPVIVVGDIDRGGVLAHLFGTVAVLHPDDQALIAGFVVNKFRGDPTLLAPGLDQLHDLTGRPTYGVIPYSDELWMDTEDSVSVVAGRTIGRPTPPRGADGLRVAAVRLPRISNSTDIEALACEPGVTVRWVTDPADVADADVVVLPGTKATVADLQWLRTAGLAEPIAAHAGAGRPLLGICGGFQMLCRHIDDAVESRAGRVDGLGLLDADIAFAAEKTLRHRTTPLQGYEIHHGQVTRCAADDWAGIGVRRDAVYGTHWHGLFDNDGFRRAWLADAAAAAGRSGFVVADDIDVSARRDAQLDVMADLLQNHLDLDAALGLVDAGPPPRPTISTGIT.

A GATase cobBQ-type domain is found at 258-427 (GLRVAAVRLP…WHGLFDNDGF (170 aa)). C339 serves as the catalytic Nucleophile. Residue H419 is part of the active site.

The protein belongs to the CobB/CobQ family. CobQ subfamily.

It participates in cofactor biosynthesis; adenosylcobalamin biosynthesis. In terms of biological role, catalyzes amidations at positions B, D, E, and G on adenosylcobyrinic A,C-diamide. NH(2) groups are provided by glutamine, and one molecule of ATP is hydrogenolyzed for each amidation. In Mycobacterium sp. (strain KMS), this protein is Cobyric acid synthase.